A 226-amino-acid chain; its full sequence is Urease accessory protein UreF (226 aa).

This sequence belongs to the UreF family. In terms of assembly, ureD, UreF and UreG form a complex that acts as a GTP-hydrolysis-dependent molecular chaperone, activating the urease apoprotein by helping to assemble the nickel containing metallocenter of UreC. The UreE protein probably delivers the nickel.

The protein localises to the cytoplasm. In terms of biological role, required for maturation of urease via the functional incorporation of the urease nickel metallocenter. This is Urease accessory protein UreF from Burkholderia cenocepacia (strain ATCC BAA-245 / DSM 16553 / LMG 16656 / NCTC 13227 / J2315 / CF5610) (Burkholderia cepacia (strain J2315)).